The following is a 166-amino-acid chain: Large ribosomal subunit protein uL10 (166 aa).

It belongs to the universal ribosomal protein uL10 family. As to quaternary structure, part of the ribosomal stalk of the 50S ribosomal subunit. The N-terminus interacts with L11 and the large rRNA to form the base of the stalk. The C-terminus forms an elongated spine to which L12 dimers bind in a sequential fashion forming a multimeric L10(L12)X complex.

In terms of biological role, forms part of the ribosomal stalk, playing a central role in the interaction of the ribosome with GTP-bound translation factors. This is Large ribosomal subunit protein uL10 from Streptococcus agalactiae serotype V (strain ATCC BAA-611 / 2603 V/R).